A 166-amino-acid chain; its full sequence is 2-amino-4-hydroxy-6-hydroxymethyldihydropteridine pyrophosphokinase (166 aa).

Belongs to the HPPK family.

It catalyses the reaction 6-hydroxymethyl-7,8-dihydropterin + ATP = (7,8-dihydropterin-6-yl)methyl diphosphate + AMP + H(+). It participates in cofactor biosynthesis; tetrahydrofolate biosynthesis; 2-amino-4-hydroxy-6-hydroxymethyl-7,8-dihydropteridine diphosphate from 7,8-dihydroneopterin triphosphate: step 4/4. Its function is as follows. Catalyzes the transfer of pyrophosphate from adenosine triphosphate (ATP) to 6-hydroxymethyl-7,8-dihydropterin, an enzymatic step in folate biosynthesis pathway. In Streptococcus pyogenes serotype M18 (strain MGAS8232), this protein is 2-amino-4-hydroxy-6-hydroxymethyldihydropteridine pyrophosphokinase (folK).